The chain runs to 424 residues: Cyclin-dependent kinase D-1 (424 aa).

In terms of domain architecture, Protein kinase spans 19-299; the sequence is YLKREVLGEG…AQQALEHRYF (281 aa). Residues 25–33 and lysine 48 contribute to the ATP site; that span reads LGEGTYGVV. At threonine 29 the chain carries Phosphothreonine. Tyrosine 30 carries the post-translational modification Phosphotyrosine. Aspartate 141 functions as the Proton acceptor in the catalytic mechanism. Phosphoserine is present on serine 168. At threonine 174 the chain carries Phosphothreonine. 2 disordered regions span residues 303–337 and 359–424; these read PAPTKPSQLPRPPPKGDSGNNKIPDLNLQDGPVVL and ADRT…GYTE. A compositionally biased stretch (basic and acidic residues) spans 359-374; sequence ADRTEEHPSGARHMDD.

This sequence belongs to the protein kinase superfamily. CMGC Ser/Thr protein kinase family. CDC2/CDKX subfamily.

The protein localises to the nucleus. It carries out the reaction L-seryl-[protein] + ATP = O-phospho-L-seryl-[protein] + ADP + H(+). The catalysed reaction is L-threonyl-[protein] + ATP = O-phospho-L-threonyl-[protein] + ADP + H(+). The enzyme catalyses [DNA-directed RNA polymerase] + ATP = phospho-[DNA-directed RNA polymerase] + ADP + H(+). In Oryza sativa subsp. indica (Rice), this protein is Cyclin-dependent kinase D-1 (CDKD-1).